The following is a 492-amino-acid chain: Phosphatidylinositol-glycan biosynthesis class W protein (492 aa).

Helical transmembrane passes span 26-46 (FILT…ATFF), 59-79 (FILE…FTEL), 82-102 (FLIV…QKNV), 127-147 (YRAF…FQVF), and 156-176 (TYGI…GALV). Residues 185-216 (IEKQQKKKREEEEDDNDKINKTSSSSSSSSSA) form a disordered region. Asn204 is a glycosylation site (N-linked (GlcNAc...) asparagine). Positions 205-216 (KTSSSSSSSSSA) are enriched in low complexity. A helical transmembrane segment spans residues 264–284 (YGLHWNFFFTLGFVSISLAFL). Asn289 carries an N-linked (GlcNAc...) asparagine glycan. Helical transmembrane passes span 290 to 310 (ISAI…NSFG), 331 to 351 (ICSF…GTEL), 364 to 384 (FATK…LCEI), and 399 to 419 (VLAI…ITLI). Asn424 carries an N-linked (GlcNAc...) asparagine glycan. Transmembrane regions (helical) follow at residues 437–457 (LFIF…MKTI) and 464–484 (SMII…ILDY).

The protein belongs to the PIGW family.

Its subcellular location is the endoplasmic reticulum membrane. It functions in the pathway glycolipid biosynthesis; glycosylphosphatidylinositol-anchor biosynthesis. Its function is as follows. Probable acetyltransferase, which acetylates the inositol ring of phosphatidylinositol during biosynthesis of GPI-anchor. This Dictyostelium discoideum (Social amoeba) protein is Phosphatidylinositol-glycan biosynthesis class W protein.